Reading from the N-terminus, the 213-residue chain is ER lumen protein-retaining receptor erd-2.1 (213 aa).

Over 1–2 (MN) the chain is Lumenal. A helical membrane pass occupies residues 3 to 21 (LFRFTADVAHAIAIVVLLL). Residues 22 to 35 (KIWKSRSCEGISGR) are Cytoplasmic-facing. A helical membrane pass occupies residues 36-53 (SQLLFALVFVTRYLDLFT). Topologically, residues 54–61 (NFFSFYNT) are lumenal. The helical transmembrane segment at 62–80 (AMKIFYLVASFGTVYLMWA) threads the bilayer. Topologically, residues 81–96 (KFKATYDRNNDSFRIE) are cytoplasmic. Residues 97-110 (FLVIPSMILALLIN) form a helical membrane-spanning segment. The Lumenal segment spans residues 111–117 (HEFIFME). The helical transmembrane segment at 118–137 (VMWTFSIYLEAVAIMPQLFM) threads the bilayer. Over 138–149 (LSRTGNAETITA) the chain is Cytoplasmic. The helical transmembrane segment at 150 to 168 (HYLFALGSYRFLYILNWVY) threads the bilayer. Residues 169–178 (RYYTESFFDP) are Lumenal-facing. The chain crosses the membrane as a helical span at residues 179-199 (ISVVAGIVQTVLYADFFYLYI). Topologically, residues 200–213 (TRVIQSNRQFEMSA) are cytoplasmic.

This sequence belongs to the ERD2 family.

The protein resides in the endoplasmic reticulum membrane. Its function is as follows. Required for the retention of luminal endoplasmic reticulum proteins. Determines the specificity of the luminal ER protein retention system. Also required for normal vesicular traffic through the Golgi. This Caenorhabditis elegans protein is ER lumen protein-retaining receptor erd-2.1.